We begin with the raw amino-acid sequence, 482 residues long: UDP-N-acetylmuramoyl-L-alanyl-D-glutamate--2,6-diaminopimelate ligase (482 aa).

Position 29 (S29) interacts with UDP-N-acetyl-alpha-D-muramoyl-L-alanyl-D-glutamate. 109–115 contacts ATP; sequence GTNGKTS. UDP-N-acetyl-alpha-D-muramoyl-L-alanyl-D-glutamate-binding positions include 151–152, S178, and R186; that span reads TT. K218 is modified (N6-carboxylysine). Meso-2,6-diaminopimelate is bound by residues R375, 399–402, G451, and E455; that span reads DNPR. The Meso-diaminopimelate recognition motif motif lies at 399-402; that stretch reads DNPR.

The protein belongs to the MurCDEF family. MurE subfamily. It depends on Mg(2+) as a cofactor. Post-translationally, carboxylation is probably crucial for Mg(2+) binding and, consequently, for the gamma-phosphate positioning of ATP.

The protein resides in the cytoplasm. It catalyses the reaction UDP-N-acetyl-alpha-D-muramoyl-L-alanyl-D-glutamate + meso-2,6-diaminopimelate + ATP = UDP-N-acetyl-alpha-D-muramoyl-L-alanyl-gamma-D-glutamyl-meso-2,6-diaminopimelate + ADP + phosphate + H(+). It participates in cell wall biogenesis; peptidoglycan biosynthesis. Catalyzes the addition of meso-diaminopimelic acid to the nucleotide precursor UDP-N-acetylmuramoyl-L-alanyl-D-glutamate (UMAG) in the biosynthesis of bacterial cell-wall peptidoglycan. The protein is UDP-N-acetylmuramoyl-L-alanyl-D-glutamate--2,6-diaminopimelate ligase of Caldanaerobacter subterraneus subsp. tengcongensis (strain DSM 15242 / JCM 11007 / NBRC 100824 / MB4) (Thermoanaerobacter tengcongensis).